The chain runs to 101 residues: MKPNFSKGLIPAIVIEEGTKEVLMLAYMNEDAYEKTLETKRTWFYSRSRQSLWNKGETSGNVQYVQSLYLDCDQDSIVVNVKQVGPACHTGEKTCFHYQII.

Asp-71 provides a ligand contact to Mg(2+). Cys-72 lines the Zn(2+) pocket. Residues Asp-73 and Asp-75 each coordinate Mg(2+). Zn(2+)-binding residues include Cys-88 and Cys-95.

It belongs to the PRA-CH family. In terms of assembly, homodimer. Mg(2+) serves as cofactor. It depends on Zn(2+) as a cofactor.

It localises to the cytoplasm. The catalysed reaction is 1-(5-phospho-beta-D-ribosyl)-5'-AMP + H2O = 1-(5-phospho-beta-D-ribosyl)-5-[(5-phospho-beta-D-ribosylamino)methylideneamino]imidazole-4-carboxamide. It functions in the pathway amino-acid biosynthesis; L-histidine biosynthesis; L-histidine from 5-phospho-alpha-D-ribose 1-diphosphate: step 3/9. Its function is as follows. Catalyzes the hydrolysis of the adenine ring of phosphoribosyl-AMP. This Bacillus cereus (strain G9842) protein is Phosphoribosyl-AMP cyclohydrolase.